A 660-amino-acid polypeptide reads, in one-letter code: Bifunctional polymyxin resistance protein ArnA (660 aa).

Positions 1 to 304 are formyltransferase ArnAFT; the sequence is MKAVIFAYHD…TLGLVAGACL (304 aa). The active-site Proton donor; for formyltransferase activity is H104. Residues R114 and 136 to 140 each bind (6R)-10-formyltetrahydrofolate; that span reads VKRAD. Residues 314-660 are dehydrogenase ArnADH; it reads RRIRVLILGV…RSVDIAERAS (347 aa). Residues D347 and 368–369 each bind NAD(+); that span reads DI. UDP-alpha-D-glucuronate-binding positions include A393, Y398, and 432–433; that span reads TS. E434 functions as the Proton acceptor; for decarboxylase activity in the catalytic mechanism. UDP-alpha-D-glucuronate-binding positions include R460, N492, 526-535, and Y613; that span reads KLIDGGQQKR. The Proton donor; for decarboxylase activity role is filled by R619.

This sequence in the N-terminal section; belongs to the Fmt family. UDP-L-Ara4N formyltransferase subfamily. The protein in the C-terminal section; belongs to the NAD(P)-dependent epimerase/dehydratase family. UDP-glucuronic acid decarboxylase subfamily. As to quaternary structure, homohexamer, formed by a dimer of trimers.

The enzyme catalyses UDP-alpha-D-glucuronate + NAD(+) = UDP-beta-L-threo-pentopyranos-4-ulose + CO2 + NADH. It carries out the reaction UDP-4-amino-4-deoxy-beta-L-arabinose + (6R)-10-formyltetrahydrofolate = UDP-4-deoxy-4-formamido-beta-L-arabinose + (6S)-5,6,7,8-tetrahydrofolate + H(+). It participates in nucleotide-sugar biosynthesis; UDP-4-deoxy-4-formamido-beta-L-arabinose biosynthesis; UDP-4-deoxy-4-formamido-beta-L-arabinose from UDP-alpha-D-glucuronate: step 1/3. It functions in the pathway nucleotide-sugar biosynthesis; UDP-4-deoxy-4-formamido-beta-L-arabinose biosynthesis; UDP-4-deoxy-4-formamido-beta-L-arabinose from UDP-alpha-D-glucuronate: step 3/3. The protein operates within bacterial outer membrane biogenesis; lipopolysaccharide biosynthesis. Its function is as follows. Bifunctional enzyme that catalyzes the oxidative decarboxylation of UDP-glucuronic acid (UDP-GlcUA) to UDP-4-keto-arabinose (UDP-Ara4O) and the addition of a formyl group to UDP-4-amino-4-deoxy-L-arabinose (UDP-L-Ara4N) to form UDP-L-4-formamido-arabinose (UDP-L-Ara4FN). The modified arabinose is attached to lipid A and is required for resistance to polymyxin and cationic antimicrobial peptides. This chain is Bifunctional polymyxin resistance protein ArnA, found in Salmonella paratyphi A (strain ATCC 9150 / SARB42).